The chain runs to 137 residues: MAKKSTSRLPKRKGEYTFRGKTVAQLQEMSFEDFAELLPAKERRSIRRGFSDSQKGVLQQFRDGKESVRTHFRNMIIFPEMIGKNLEVYNGKEFVKIEIMPEMIGHRFGEYSPTRNRVSHGSAGVGATRSSKFVPLK.

The tract at residues 115–137 (RNRVSHGSAGVGATRSSKFVPLK) is disordered.

This sequence belongs to the universal ribosomal protein uS19 family.

Functionally, protein S19 forms a complex with S13 that binds strongly to the 16S ribosomal RNA. In Methanococcoides burtonii (strain DSM 6242 / NBRC 107633 / OCM 468 / ACE-M), this protein is Small ribosomal subunit protein uS19.